The chain runs to 507 residues: Probable D-lactate dehydrogenase, mitochondrial (507 aa).

A mitochondrion-targeting transit peptide spans 1-52; it reads MARLLRSATWELFPWRGYCSQKAKGELCRDFVEALKAVVGGSHVSTAAVVRE. Lysine 36 is subject to N6-acetyllysine. The FAD-binding PCMH-type domain occupies 62–265; sequence RCEPPDAVVW…TATTLRLHPA (204 aa). Residue lysine 315 is modified to N6-acetyllysine. Lysine 358 carries the post-translational modification N6-acetyllysine; alternate. The residue at position 358 (lysine 358) is an N6-succinyllysine; alternate. Residues lysine 445 and lysine 472 each carry the N6-acetyllysine modification.

Belongs to the FAD-binding oxidoreductase/transferase type 4 family. In terms of assembly, interacts with CSRP3. It depends on FAD as a cofactor. In terms of tissue distribution, expressed moderately in heart and liver and at lower levels in skeletal muscle and kidney.

The protein localises to the mitochondrion. It catalyses the reaction (R)-lactate + 2 Fe(III)-[cytochrome c] = 2 Fe(II)-[cytochrome c] + pyruvate + 2 H(+). Involved in D-lactate, but not L-lactate catabolic process. The protein is Probable D-lactate dehydrogenase, mitochondrial of Homo sapiens (Human).